We begin with the raw amino-acid sequence, 117 residues long: Mini-circle uncharacterized 12.9 kDa protein (117 aa).

This Streptomyces coelicolor (strain ATCC BAA-471 / A3(2) / M145) protein is Mini-circle uncharacterized 12.9 kDa protein.